Here is a 429-residue protein sequence, read N- to C-terminus: Enolase (429 aa).

Q163 contacts (2R)-2-phosphoglycerate. The active-site Proton donor is the E205. Positions 242, 286, and 313 each coordinate Mg(2+). Residues K338, R367, S368, and K389 each contribute to the (2R)-2-phosphoglycerate site. The active-site Proton acceptor is K338.

It belongs to the enolase family. Mg(2+) serves as cofactor.

It is found in the cytoplasm. Its subcellular location is the secreted. The protein localises to the cell surface. The catalysed reaction is (2R)-2-phosphoglycerate = phosphoenolpyruvate + H2O. It functions in the pathway carbohydrate degradation; glycolysis; pyruvate from D-glyceraldehyde 3-phosphate: step 4/5. In terms of biological role, catalyzes the reversible conversion of 2-phosphoglycerate (2-PG) into phosphoenolpyruvate (PEP). It is essential for the degradation of carbohydrates via glycolysis. In Citrifermentans bemidjiense (strain ATCC BAA-1014 / DSM 16622 / JCM 12645 / Bem) (Geobacter bemidjiensis), this protein is Enolase.